The chain runs to 347 residues: Sulfate/thiosulfate import ATP-binding protein CysA 1 (347 aa).

The ABC transporter domain maps to 3 to 237 (VRVESLRKEF…PVSPFVYGFI (235 aa)). 35–42 (GPSGSGKT) lines the ATP pocket.

Belongs to the ABC transporter superfamily. Sulfate/tungstate importer (TC 3.A.1.6) family. The complex is composed of two ATP-binding proteins (CysA), two transmembrane proteins (CysT and CysW) and a solute-binding protein (CysP).

The protein resides in the cell inner membrane. The enzyme catalyses sulfate(out) + ATP + H2O = sulfate(in) + ADP + phosphate + H(+). The catalysed reaction is thiosulfate(out) + ATP + H2O = thiosulfate(in) + ADP + phosphate + H(+). Functionally, part of the ABC transporter complex CysAWTP involved in sulfate/thiosulfate import. Responsible for energy coupling to the transport system. The polypeptide is Sulfate/thiosulfate import ATP-binding protein CysA 1 (Rhizobium meliloti (strain 1021) (Ensifer meliloti)).